The primary structure comprises 782 residues: E3 UFM1-protein ligase 1 homolog (782 aa).

The segment at 404–478 (NVSTQELEDE…SRGGGGASKK (75 aa)) is disordered.

This sequence belongs to the UFL1 family.

In terms of biological role, E3 UFM1-protein ligase that mediates ufmylation of target proteins. The sequence is that of E3 UFM1-protein ligase 1 homolog from Drosophila melanogaster (Fruit fly).